The following is a 437-amino-acid chain: MSMFLDTAKVSVQAGRGGDGMVAFRREKYVPNGGPWGGDGGKGGSVIFKVDEGLRTLIDFRYNRKFKAKSGEKGMTKGMHGRGSEDLIISVPQGTTVRDAETGKVLTDLVEHGQEFVVAKGGRGGRGNIRFATPRNPAPEIAENGEPGEERQLELELKILADVGLVGFPSVGKSTLLSVVSSAKPKIGAYHFTTIVPNLGMVRTKSGESFAMADLPGLIKGASQGVGLGTQFLRHIERTRVILHVIDMSAAEGRDPYEDYVAINKELEAYNLRLMERPQIIVANKMDMPEAKEQLQRFKEQLAAQYDDFEELPIIFPISSLAHQGLDSLLEATAELLAKTDDFLLYDEADLAEDEAYYGFAAEEKAFEISRADDAAWVLSGEKLERLFVMTNLERDESIMKFARQLRGMGVDEALRERGAKDGDIVRIGKFEFEFVD.

The region spanning 2–160 (SMFLDTAKVS…RQLELELKIL (159 aa)) is the Obg domain. In terms of domain architecture, OBG-type G spans 161–338 (ADVGLVGFPS…LLEATAELLA (178 aa)). GTP-binding positions include 167–174 (GFPSVGKS), 192–196 (FTTIV), 214–217 (DLPG), 284–287 (NKMD), and 319–321 (SSL). Residues Ser174 and Thr194 each coordinate Mg(2+). One can recognise an OCT domain in the interval 359-437 (GFAAEEKAFE…IGKFEFEFVD (79 aa)).

Belongs to the TRAFAC class OBG-HflX-like GTPase superfamily. OBG GTPase family. As to quaternary structure, monomer. It depends on Mg(2+) as a cofactor.

It is found in the cytoplasm. Its function is as follows. An essential GTPase which binds GTP, GDP and possibly (p)ppGpp with moderate affinity, with high nucleotide exchange rates and a fairly low GTP hydrolysis rate. Plays a role in control of the cell cycle, stress response, ribosome biogenesis and in those bacteria that undergo differentiation, in morphogenesis control. The chain is GTPase Obg from Streptococcus equi subsp. equi (strain 4047).